The primary structure comprises 143 residues: Large ribosomal subunit protein uL13 (143 aa).

The protein belongs to the universal ribosomal protein uL13 family. In terms of assembly, part of the 50S ribosomal subunit.

Functionally, this protein is one of the early assembly proteins of the 50S ribosomal subunit, although it is not seen to bind rRNA by itself. It is important during the early stages of 50S assembly. In Neisseria gonorrhoeae (strain ATCC 700825 / FA 1090), this protein is Large ribosomal subunit protein uL13.